The following is a 508-amino-acid chain: Photosystem II CP47 reaction center protein (508 aa).

Transmembrane regions (helical) follow at residues 21–36 (SVHI…WAGS), 101–115 (IVFS…IWHW), 140–156 (GIHL…FGAF), 203–218 (IAAG…FHLS), 237–252 (VLSS…AFVV), and 457–472 (SFAL…HGSR).

It belongs to the PsbB/PsbC family. PsbB subfamily. In terms of assembly, PSII is composed of 1 copy each of membrane proteins PsbA, PsbB, PsbC, PsbD, PsbE, PsbF, PsbH, PsbI, PsbJ, PsbK, PsbL, PsbM, PsbT, PsbX, PsbY, PsbZ, Psb30/Ycf12, at least 3 peripheral proteins of the oxygen-evolving complex and a large number of cofactors. It forms dimeric complexes. It depends on Binds multiple chlorophylls. PSII binds additional chlorophylls, carotenoids and specific lipids. as a cofactor.

It localises to the plastid. The protein resides in the chloroplast thylakoid membrane. Functionally, one of the components of the core complex of photosystem II (PSII). It binds chlorophyll and helps catalyze the primary light-induced photochemical processes of PSII. PSII is a light-driven water:plastoquinone oxidoreductase, using light energy to abstract electrons from H(2)O, generating O(2) and a proton gradient subsequently used for ATP formation. This Draba nemorosa (Woodland whitlowgrass) protein is Photosystem II CP47 reaction center protein.